Here is a 630-residue protein sequence, read N- to C-terminus: MVLQKRPDYGFNGYEVPHTPRAARSPRKSAFKKKSENHQISSFDLLAAVAGKLLLEGGNSSSSSNNTSGNNEDQCAVKKEPLNGGDIMVEEETTNSDHDNNNAERSFFVSEILQKSHEMQSFNRSPSPLKEFHFGSSSGITSDSSEKFETQELAYDESKINNGDCYRSESNDKKSMLGGLNFEAKLSRNVVGKDEKHIGSGFRKPIPQNPSTCSDDVDLHGKENDDGENFSACYRTKSFRSTLRIGDRRIRKVWASKYCKVPPKLKDTTVTNSDLDLKSDYYSKKHCLKSLRSERNYPIKKRRYFDGYTASQSEETNKNEGQSGSPRKASAFLSSIACQKQPAAFQSPRDSNNVKLGIKSFRVPELFIEIPETATVGSLKRTVLEAVTSILGGGLRIGVLVHGKKVRDDSKMLLQTGLSLDTLSDTLGFCLEPNPPQSTKPLSPEDSDFARPCNVPHTLTRCLPSPGKHAKPSNSVESDLDSKPSAPNRGKTIYSRALIPVSPLHAQALTVVPPRKTKRSEVAQRRIRRPFSVAEVEALVQAVERLGTGRWRDVKLRAFDNAKHRTYVDLKDKWKTLVHTARISPQQRRGEPVPQELLDRVLTAHAYWSQQQGKHQLLEGPQQLETSLGL.

3 disordered regions span residues 1–38 (MVLQ…SENH), 56–78 (EGGN…CAVK), and 308–327 (YTAS…GSPR). Positions 57 to 71 (GGNSSSSSNNTSGNN) are enriched in low complexity. The segment covering 309-325 (TASQSEETNKNEGQSGS) has biased composition (polar residues). The 80-residue stretch at 354 to 433 (VKLGIKSFRV…SDTLGFCLEP (80 aa)) folds into the Ubiquitin-like domain. The segment at 463 to 489 (LPSPGKHAKPSNSVESDLDSKPSAPNR) is disordered. Residues 523-582 (AQRRIRRPFSVAEVEALVQAVERLGTGRWRDVKLRAFDNAKHRTYVDLKDKWKTLVHTAR) form the HTH myb-type domain. The H-T-H motif DNA-binding region spans 551–578 (WRDVKLRAFDNAKHRTYVDLKDKWKTLV).

Homodimer. Expressed ubiquitously.

The protein localises to the nucleus. Functionally, binds specifically to the plant telomeric double-stranded DNA sequences. At least 6 repeats of telomeric sequences are required for binding. This chain is Telomere repeat-binding protein 5 (TRP5), found in Arabidopsis thaliana (Mouse-ear cress).